A 201-amino-acid polypeptide reads, in one-letter code: Inosine triphosphate pyrophosphatase (201 aa).

16–21 serves as a coordination point for ITP; sequence TGNAKK. Position 44 (Glu-44) interacts with Mg(2+). Residues Lys-56, 72-73, Lys-89, 148-151, Lys-171, and 176-177 contribute to the ITP site; these read DT, FGWD, and HR.

Belongs to the HAM1 NTPase family. In terms of assembly, homodimer. The cofactor is Mg(2+). Requires Mn(2+) as cofactor.

The protein resides in the cytoplasm. It carries out the reaction ITP + H2O = IMP + diphosphate + H(+). The enzyme catalyses dITP + H2O = dIMP + diphosphate + H(+). It catalyses the reaction XTP + H2O = XMP + diphosphate + H(+). Pyrophosphatase that hydrolyzes non-canonical purine nucleotides such as inosine triphosphate (ITP), deoxyinosine triphosphate (dITP) or xanthosine 5'-triphosphate (XTP) to their respective monophosphate derivatives. The enzyme does not distinguish between the deoxy- and ribose forms. Probably excludes non-canonical purines from RNA and DNA precursor pools, thus preventing their incorporation into RNA and DNA and avoiding chromosomal lesions. The polypeptide is Inosine triphosphate pyrophosphatase (Sorghum bicolor (Sorghum)).